Here is a 171-residue protein sequence, read N- to C-terminus: Peptide deformylase 1 (171 aa).

Fe cation contacts are provided by cysteine 99 and histidine 141. Glutamate 142 is a catalytic residue.

This sequence belongs to the polypeptide deformylase family. The cofactor is Fe(2+).

It catalyses the reaction N-terminal N-formyl-L-methionyl-[peptide] + H2O = N-terminal L-methionyl-[peptide] + formate. Removes the formyl group from the N-terminal Met of newly synthesized proteins. Requires at least a dipeptide for an efficient rate of reaction. N-terminal L-methionine is a prerequisite for activity but the enzyme has broad specificity at other positions. This Xanthomonas axonopodis pv. citri (strain 306) protein is Peptide deformylase 1.